We begin with the raw amino-acid sequence, 136 residues long: ATP synthase F(0) complex subunit C1, mitochondrial (136 aa).

The transit peptide at Met1–Arg61 directs the protein to the mitochondrion. A helical transmembrane segment spans residues Val77–Tyr97. Position 104 is an N6,N6,N6-trimethyllysine (Lys104). Residues Ile112–Ile132 form a helical membrane-spanning segment.

It belongs to the ATPase C chain family. As to quaternary structure, homooctamer; the c-ring consists of eight c subunits forming a circle, and each subunit adopts a hairpin shape. Component of the ATP synthase complex composed at least of ATP5F1A/subunit alpha, ATP5F1B/subunit beta, ATP5MC1/subunit c (homooctomer), MT-ATP6/subunit a, MT-ATP8/subunit 8, ATP5ME/subunit e, ATP5MF/subunit f, ATP5MG/subunit g, ATP5MK/subunit k, ATP5MJ/subunit j, ATP5F1C/subunit gamma, ATP5F1D/subunit delta, ATP5F1E/subunit epsilon, ATP5PF/subunit F6, ATP5PB/subunit b, ATP5PD/subunit d, ATP5PO/subunit OSCP. ATP synthase complex consists of a soluble F(1) head domain (subunits alpha(3) and beta(3)) - the catalytic core - and a membrane F(0) domain - the membrane proton channel (subunits c, a, 8, e, f, g, k and j). These two domains are linked by a central stalk (subunits gamma, delta, and epsilon) rotating inside the F1 region and a stationary peripheral stalk (subunits F6, b, d, and OSCP). Interacts with TMEM70 (homooligomer form); this interaction facilitates the oligomer formation of subunit c/ATP5MC1 (c-ring) and the c-ring membrane insertion and also protects ATP5MC1 against intramitochondrial proteolysis. Trimethylated by ATPSCKMT at Lys-104. Methylation is required for proper incorporation of the C subunit into the ATP synthase complex and mitochondrial respiration.

The protein resides in the mitochondrion membrane. The catalysed reaction is H(+)(in) = H(+)(out). Functionally, subunit c, of the mitochondrial membrane ATP synthase complex (F(1)F(0) ATP synthase or Complex V) that produces ATP from ADP in the presence of a proton gradient across the membrane which is generated by electron transport complexes of the respiratory chain. ATP synthase complex consist of a soluble F(1) head domain - the catalytic core - and a membrane F(1) domain - the membrane proton channel. These two domains are linked by a central stalk rotating inside the F(1) region and a stationary peripheral stalk. During catalysis, ATP synthesis in the catalytic domain of F(1) is coupled via a rotary mechanism of the central stalk subunits to proton translocation. With the subunit a (MT-ATP6), forms the proton-conducting channel in the F(0) domain, that contains two crucial half-channels (inlet and outlet) that facilitate proton movement from the mitochondrial intermembrane space (IMS) into the matrix. Protons are taken up via the inlet half-channel and released through the outlet half-channel, following a Grotthuss mechanism. This Rattus norvegicus (Rat) protein is ATP synthase F(0) complex subunit C1, mitochondrial.